Reading from the N-terminus, the 337-residue chain is Secreted effector protein EspF(U) (337 aa).

5 tandem repeats follow at residues 96–142 (IKPA…AEHG), 143–189 (IQPA…AEHG), 190–236 (IQPA…AEHG), 237–283 (IQPA…AEHG), and 284–330 (IQPA…AEHG). Residues 96–330 (IKPARSMAEH…RLMQHLAEHG (235 aa)) are 5 X 48 AA approximate tandem repeats. Residues 291–312 (AEHIPPAPNWPAPTPPVQNEQS) form a disordered region. The span at 295 to 306 (PPAPNWPAPTPP) shows a compositional bias: pro residues.

Belongs to the EspF(U)/TccP family. Interacts with host BAIAP2 and host WASL/N-WASP. Can also interact with host proteins BAIAP2L1 and WAS/WASP.

Its subcellular location is the secreted. It is found in the host cytoplasm. Its function is as follows. Required for efficient pedestal formation in host epithelial cells during infection. Acts as an intermediate between Tir (via host BAIAP2) and host WASL/N-WASP. Directly binds and activates WASL/N-WASP, which stimulates actin polymerization and leads to the formation of actin pedestals at the sites of bacterial adhesion. The polypeptide is Secreted effector protein EspF(U) (espF(U)) (Escherichia coli O157:H7).